We begin with the raw amino-acid sequence, 359 residues long: S-adenosylmethionine:tRNA ribosyltransferase-isomerase (359 aa).

This sequence belongs to the QueA family. Monomer.

The protein resides in the cytoplasm. It catalyses the reaction 7-aminomethyl-7-carbaguanosine(34) in tRNA + S-adenosyl-L-methionine = epoxyqueuosine(34) in tRNA + adenine + L-methionine + 2 H(+). Its pathway is tRNA modification; tRNA-queuosine biosynthesis. In terms of biological role, transfers and isomerizes the ribose moiety from AdoMet to the 7-aminomethyl group of 7-deazaguanine (preQ1-tRNA) to give epoxyqueuosine (oQ-tRNA). The chain is S-adenosylmethionine:tRNA ribosyltransferase-isomerase from Alcanivorax borkumensis (strain ATCC 700651 / DSM 11573 / NCIMB 13689 / SK2).